The chain runs to 194 residues: Imidazoleglycerol-phosphate dehydratase (194 aa).

This sequence belongs to the imidazoleglycerol-phosphate dehydratase family.

It localises to the cytoplasm. It carries out the reaction D-erythro-1-(imidazol-4-yl)glycerol 3-phosphate = 3-(imidazol-4-yl)-2-oxopropyl phosphate + H2O. The protein operates within amino-acid biosynthesis; L-histidine biosynthesis; L-histidine from 5-phospho-alpha-D-ribose 1-diphosphate: step 6/9. In Rubrobacter xylanophilus (strain DSM 9941 / JCM 11954 / NBRC 16129 / PRD-1), this protein is Imidazoleglycerol-phosphate dehydratase.